A 248-amino-acid polypeptide reads, in one-letter code: Murein peptide amidase A (248 aa).

Residues 3–245 enclose the Peptidase M14 domain; sequence RYYSNNQEIT…DAFIALLQHD (243 aa). Zn(2+) is bound by residues His-60, Glu-63, and His-168. Glu-221 acts as the Proton donor/acceptor in catalysis.

It belongs to the peptidase M14 family. As to quaternary structure, homodimer. Zn(2+) serves as cofactor.

It localises to the cytoplasm. It catalyses the reaction L-alanyl-gamma-D-glutamyl-meso-2,6-diaminopimelate + H2O = L-alanyl-D-glutamate + meso-2,6-diaminopimelate. It functions in the pathway cell wall degradation; peptidoglycan degradation. Its function is as follows. Involved in muropeptide degradation. Catalyzes the hydrolysis of the gamma-D-glutamyl-diaminopimelic acid (gamma-D-Glu-Dap) amide bond in the murein tripeptide L-alanyl-gamma-D-glutamyl-meso-diaminopimelic acid, leading to the formation of L-Ala-gamma-D-Glu and Dap. Has weak activity with L-Ala-gamma-D-Glu-L-Lys, MurNAc-tripeptide and gamma-D-Glu-meso-Dap. Cannot hydrolyze murein tetrapeptide. The polypeptide is Murein peptide amidase A (Vibrio campbellii (strain ATCC BAA-1116)).